A 395-amino-acid chain; its full sequence is Terminal nucleotidyltransferase 5B (395 aa).

Belongs to the TENT family.

It is found in the cytoplasm. Its subcellular location is the nucleus. The catalysed reaction is RNA(n) + ATP = RNA(n)-3'-adenine ribonucleotide + diphosphate. Its function is as follows. Catalyzes the transfer of one adenosine molecule from an ATP to an mRNA poly(A) tail bearing a 3'-OH terminal group in an ATP hydrolysis-dependent manner and participates in cytoplasmic polyadenylation. May be involved in maintaining the translation efficiency of at least some genes through preventing degradation of their mRNAs. The polypeptide is Terminal nucleotidyltransferase 5B (Xenopus tropicalis (Western clawed frog)).